The sequence spans 350 residues: Enoyl-[acyl-carrier-protein] reductase, mitochondrial (350 aa).

The transit peptide at 1–14 (MNSTRNIISLVRRY) directs the protein to the mitochondrion. The active-site Proton donor is the Y69. NADP(+)-binding positions include N143, 169–172 (NSMV), 192–194 (RDG), 261–264 (YGGM), 286–288 (FWL), and K343.

It belongs to the zinc-containing alcohol dehydrogenase family. Quinone oxidoreductase subfamily. As to quaternary structure, homodimer.

The protein localises to the mitochondrion. The enzyme catalyses a 2,3-saturated acyl-[ACP] + NADP(+) = a (2E)-enoyl-[ACP] + NADPH + H(+). Functionally, catalyzes the NADPH-dependent reduction of trans-2-enoyl thioesters in mitochondrial fatty acid synthesis (fatty acid synthesis type II). Fatty acid chain elongation in mitochondria uses acyl carrier protein (ACP) as an acyl group carrier, but the enzyme accepts both ACP and CoA thioesters as substrates in vitro. The protein is Enoyl-[acyl-carrier-protein] reductase, mitochondrial (mecr) of Dictyostelium discoideum (Social amoeba).